An 872-amino-acid polypeptide reads, in one-letter code: MLSNTIRSNFLKFYANRHHTILPSSPVFPHNDPSILFTNAGMNQFKDIFLNKEKVSYSRATTSQKCIRAGGKHNDLDNVGHTSRHLTFFEMLGNFSFGDYFKAEAIAFAWEVSLSVFNFNPEGIYATVHEKDDEAFALWEAYLPTDRIFRLTDKDNFWSMANTGPCGYCSELLFDRGPSFGNASSPLDDTDGERFLEYWNLVFMEFNRTSEGSLLALPNKHVDTGAGLERLVSLIAGTHTVFEADVLRELIAKTEQLSGKVYHPDDSGAAFRVIADHVRSLSFAIADGLLPGNTERGYVLRKILRRSVNYGRRLGFRNPFLAEIVPSLADAMGEAYPELKNSLSQIQKVLTLEEESFFKTLDRGGNLLQQVLKSSSSSSCISGEDAFKLKDTYGMPIDEISLLAKDYDYSVDMDTFHKLEQEAKERSRKNVVQSQGTSESIYNELHLTSEFIGYDHLSCDTFIEAIISKDHIVSSLQEKQEGAIVLKVSPFYAEKGGQVGDSGEIFCSEGTFIVTHTTSPKAGLIVHHGRISQGSLTVEAAVTAQVNRYRRKRIANNHTACHLLHKALEITLGDHIRQAGSYVDDTKIRLDFTHPQAISPEDLLCIETLVNESIRENEPVDIREALYSDVMNSSEIKQFFGDKYSDVVRVVSAGHSHELCGGTHAEATGDIGFFRITKEHAVAMGIRRIEAVTGEKAEATVHQQSEVLEEIATLLQVPRDQIVSRLTATLDERKQQDKRLNELENSLIQTKLDKLIHNCHQRQGITCLVHHLAEHENHRLQQYAQCLHQRIPEKLISLWTTEKNGKYIVLSRVSDDLITQGVHAQDLLKAVLTPCGGRWGGKDQSAQGSAPALPATEVLNETLWQWISTQLI.

4 residues coordinate Zn(2+): His558, His562, Cys660, and His664.

This sequence belongs to the class-II aminoacyl-tRNA synthetase family. Requires Zn(2+) as cofactor.

It localises to the cytoplasm. The enzyme catalyses tRNA(Ala) + L-alanine + ATP = L-alanyl-tRNA(Ala) + AMP + diphosphate. In terms of biological role, catalyzes the attachment of alanine to tRNA(Ala) in a two-step reaction: alanine is first activated by ATP to form Ala-AMP and then transferred to the acceptor end of tRNA(Ala). Also edits incorrectly charged Ser-tRNA(Ala) and Gly-tRNA(Ala) via its editing domain. This is Alanine--tRNA ligase from Chlamydia pneumoniae (Chlamydophila pneumoniae).